We begin with the raw amino-acid sequence, 288 residues long: Orotidine 5'-phosphate decarboxylase (288 aa).

The active-site Proton donor is the K99.

Belongs to the OMP decarboxylase family. Type 2 subfamily.

The catalysed reaction is orotidine 5'-phosphate + H(+) = UMP + CO2. Its pathway is pyrimidine metabolism; UMP biosynthesis via de novo pathway; UMP from orotate: step 2/2. The chain is Orotidine 5'-phosphate decarboxylase (pyrF) from Myxococcus xanthus (strain DK1622).